Consider the following 846-residue polypeptide: Inactive cap-specific mRNA (nucleoside-2'-O-)-methyltransferase 1B (846 aa).

The segment at 30 to 50 is disordered; that stretch reads DDEDDFVDDPSPTEQKTKAEK. The G-patch domain maps to 44-90; that stretch reads QKTKAEKKMERMGYKAGEGLGKNKQGIQEPIAISFREGKAGLGHEQW. The region spanning 184 to 413 is the RrmJ-type SAM-dependent 2'-O-MTase domain; sequence FFLNRSAMKT…ERFVVCKGLR (230 aa).

This is Inactive cap-specific mRNA (nucleoside-2'-O-)-methyltransferase 1B from Caenorhabditis briggsae.